A 248-amino-acid polypeptide reads, in one-letter code: Probable aquaporin TIP2-2 (248 aa).

The next 2 helical transmembrane spans lie at 21–41 (AYVAEFISTLVFVFAGVGSAI) and 55–75 (AGLVAVAVCHGFGLFVAVAIG). Positions 84–86 (NPA) match the NPA 1 motif. A run of 3 helical transmembrane segments spans residues 87–109 (VTFGLALGGQITILTGVFYWIAQ), 133–153 (LSGVGAFEGVVMEIIVTFGLV), and 168–188 (LGTIAPIAIGFIVGANILVAG). Positions 196–198 (NPA) match the NPA 2 motif. A helical membrane pass occupies residues 210-230 (YTNIWIYWVGPLVGGGLAGLV).

The protein belongs to the MIP/aquaporin (TC 1.A.8) family. TIP (TC 1.A.8.10) subfamily. As to expression, expressed in roots and leaves.

Its subcellular location is the vacuole membrane. In terms of biological role, aquaporins facilitate the transport of water and small neutral solutes across cell membranes. May be involved in transport from the vacuolar compartment to the cytoplasm. The sequence is that of Probable aquaporin TIP2-2 (TIP2-2) from Oryza sativa subsp. japonica (Rice).